The chain runs to 615 residues: Putative lipase ATG15 (615 aa).

The Cytoplasmic segment spans residues 1 to 22 (MKQLGEEHPLISTKRPRAKKRR). A helical; Signal-anchor for type II membrane protein membrane pass occupies residues 23 to 43 (SIAICAAVLTLIAFGFIRFVP). The Lumenal segment spans residues 44-615 (KDILAGGWYE…NSAAHHVSSI (572 aa)). N253, N276, and N360 each carry an N-linked (GlcNAc...) asparagine glycan. The active-site Charge relay system is the S378. The segment at 520–559 (NKNDEPPLPNPLHPKPPSTVRSSNMPHEQSPNASRSLSSL) is disordered. Over residues 525 to 536 (PPLPNPLHPKPP) the composition is skewed to pro residues. A compositionally biased stretch (polar residues) spans 538–559 (TVRSSNMPHEQSPNASRSLSSL). The N-linked (GlcNAc...) asparagine glycan is linked to N551.

Belongs to the AB hydrolase superfamily. Lipase family. As to quaternary structure, binds to both phosphatidylinositol (PI) and phosphatidylinositol 3,5-bisphosphate (PIP2).

The protein localises to the endosome. It is found in the multivesicular body membrane. Its subcellular location is the prevacuolar compartment membrane. The enzyme catalyses a triacylglycerol + H2O = a diacylglycerol + a fatty acid + H(+). Its function is as follows. Lipase which is essential for lysis of subvacuolar cytoplasm to vacuole targeted bodies and intravacuolar autophagic bodies. Involved in the lysis of intravacuolar multivesicular body (MVB) vesicles. The intravacuolar membrane disintegration by ATG15 is critical to life span extension. This chain is Putative lipase ATG15 (ATG15), found in Debaryomyces hansenii (strain ATCC 36239 / CBS 767 / BCRC 21394 / JCM 1990 / NBRC 0083 / IGC 2968) (Yeast).